The primary structure comprises 359 residues: MSRVYNFCSGPAALPEAVLKKAQAELLDWHGAGVSVMEMSHRSSEFMSILASAKARLSRLMNISDDYEILFVQGGASTLFSQIPANLANGFESACFLDTGAWSSKAIKEAKKYTKVNVVGSSKAQNYTTVPDFSTLELDESAAYLHICPNETIGGLEFADLPETNLPIVADLSSTILSRKVDVSKYGVIYAGAQKNVGPAGVVICIIRKDLLARSSDDLPAIWNFAHLAENDSMINTPPTFAIYLADLVFEWLEAQGGVEAIEQINIRKAQALYDFIDSSNFYSNPVDPVYRSRMNVPFILADESLEALFLQESEAAGLRTLAGHRSVGGMRASIYNAMPMEGIEALIEFMRGFEERHG.

L-glutamate contacts are provided by S9 and R42. Residues 76–77 (AS), W102, T152, D171, and Q194 contribute to the pyridoxal 5'-phosphate site. Residue K195 is modified to N6-(pyridoxal phosphate)lysine. 236 to 237 (NT) is a binding site for pyridoxal 5'-phosphate.

It belongs to the class-V pyridoxal-phosphate-dependent aminotransferase family. SerC subfamily. In terms of assembly, homodimer. Requires pyridoxal 5'-phosphate as cofactor.

Its subcellular location is the cytoplasm. The enzyme catalyses O-phospho-L-serine + 2-oxoglutarate = 3-phosphooxypyruvate + L-glutamate. It catalyses the reaction 4-(phosphooxy)-L-threonine + 2-oxoglutarate = (R)-3-hydroxy-2-oxo-4-phosphooxybutanoate + L-glutamate. It functions in the pathway amino-acid biosynthesis; L-serine biosynthesis; L-serine from 3-phospho-D-glycerate: step 2/3. Its pathway is cofactor biosynthesis; pyridoxine 5'-phosphate biosynthesis; pyridoxine 5'-phosphate from D-erythrose 4-phosphate: step 3/5. Catalyzes the reversible conversion of 3-phosphohydroxypyruvate to phosphoserine and of 3-hydroxy-2-oxo-4-phosphonooxybutanoate to phosphohydroxythreonine. This Marinomonas sp. (strain MWYL1) protein is Phosphoserine aminotransferase.